The sequence spans 177 residues: Adenine phosphoribosyltransferase (177 aa).

Belongs to the purine/pyrimidine phosphoribosyltransferase family. In terms of assembly, homodimer.

Its subcellular location is the cytoplasm. It carries out the reaction AMP + diphosphate = 5-phospho-alpha-D-ribose 1-diphosphate + adenine. It functions in the pathway purine metabolism; AMP biosynthesis via salvage pathway; AMP from adenine: step 1/1. Its function is as follows. Catalyzes a salvage reaction resulting in the formation of AMP, that is energically less costly than de novo synthesis. The sequence is that of Adenine phosphoribosyltransferase from Chlorobium limicola (strain DSM 245 / NBRC 103803 / 6330).